The chain runs to 155 residues: dCTP deaminase (155 aa).

DCTP contacts are provided by residues 79–84, Asp95, Gln124, and Tyr138; that span reads RSSLAR.

It belongs to the dCTP deaminase family. In terms of assembly, homotrimer.

The enzyme catalyses dCTP + H2O + H(+) = dUTP + NH4(+). It participates in pyrimidine metabolism; dUMP biosynthesis; dUMP from dCTP (dUTP route): step 1/2. Catalyzes the deamination of dCTP to dUTP. In Thermococcus kodakarensis (strain ATCC BAA-918 / JCM 12380 / KOD1) (Pyrococcus kodakaraensis (strain KOD1)), this protein is dCTP deaminase.